A 1160-amino-acid polypeptide reads, in one-letter code: Protein translocase subunit SecA (1160 aa).

Residues Gln-162 and 180-184 (GEGKT) contribute to the ATP site. Positions 342-362 (LLEEKEEAEEEGDSRRAQELE) are disordered. The segment covering 344–353 (EEKEEAEEEG) has biased composition (acidic residues). Asp-726 provides a ligand contact to ATP. Residues 1060 to 1134 (EVQTEGQGPR…RNEYVTVRNN (75 aa)) form a disordered region. Residues 1074 to 1083 (QRNAQTQHDS) show a composition bias toward polar residues. Residues 1104 to 1115 (AAERDPTVEEKQ) show a composition bias toward basic and acidic residues.

This sequence belongs to the SecA family. In terms of assembly, monomer and homodimer. Part of the essential Sec protein translocation apparatus which comprises SecA, SecYEG and auxiliary proteins SecDF. Other proteins may also be involved.

Its subcellular location is the cell inner membrane. The protein resides in the cytoplasm. It carries out the reaction ATP + H2O + cellular proteinSide 1 = ADP + phosphate + cellular proteinSide 2.. Part of the Sec protein translocase complex. Interacts with the SecYEG preprotein conducting channel. Has a central role in coupling the hydrolysis of ATP to the transfer of proteins into and across the cell membrane, serving as an ATP-driven molecular motor driving the stepwise translocation of polypeptide chains across the membrane. The sequence is that of Protein translocase subunit SecA from Salinibacter ruber (strain DSM 13855 / M31).